A 151-amino-acid polypeptide reads, in one-letter code: SsrA-binding protein (151 aa).

The tract at residues 121-151 (GKKLHDKRDTEKDREWQREKQRVMKNQRGAA) is disordered. The segment covering 126–142 (DKRDTEKDREWQREKQR) has biased composition (basic and acidic residues).

This sequence belongs to the SmpB family.

Its subcellular location is the cytoplasm. Required for rescue of stalled ribosomes mediated by trans-translation. Binds to transfer-messenger RNA (tmRNA), required for stable association of tmRNA with ribosomes. tmRNA and SmpB together mimic tRNA shape, replacing the anticodon stem-loop with SmpB. tmRNA is encoded by the ssrA gene; the 2 termini fold to resemble tRNA(Ala) and it encodes a 'tag peptide', a short internal open reading frame. During trans-translation Ala-aminoacylated tmRNA acts like a tRNA, entering the A-site of stalled ribosomes, displacing the stalled mRNA. The ribosome then switches to translate the ORF on the tmRNA; the nascent peptide is terminated with the 'tag peptide' encoded by the tmRNA and targeted for degradation. The ribosome is freed to recommence translation, which seems to be the essential function of trans-translation. The sequence is that of SsrA-binding protein from Chromobacterium violaceum (strain ATCC 12472 / DSM 30191 / JCM 1249 / CCUG 213 / NBRC 12614 / NCIMB 9131 / NCTC 9757 / MK).